The following is a 454-amino-acid chain: Kynurenine--oxoglutarate transaminase 3 (454 aa).

Gly-71 contacts substrate. At Lys-116 the chain carries N6-acetyllysine; alternate. Position 116 is an N6-succinyllysine; alternate (Lys-116). Asn-218 serves as a coordination point for substrate. Lys-280 carries the N6-(pyridoxal phosphate)lysine modification. Arg-429 lines the substrate pocket.

Belongs to the class-I pyridoxal-phosphate-dependent aminotransferase family. Homodimer. Requires pyridoxal 5'-phosphate as cofactor.

It carries out the reaction L-kynurenine + 2-oxoglutarate = kynurenate + L-glutamate + H2O. The enzyme catalyses L-kynurenine + glyoxylate = kynurenate + glycine + H2O. It catalyses the reaction 3-hydroxy-L-kynurenine + glyoxylate = xanthurenate + glycine + H2O. The catalysed reaction is an S-substituted L-cysteine + H2O = a thiol + pyruvate + NH4(+). It participates in amino-acid degradation; L-kynurenine degradation; kynurenate from L-kynurenine: step 1/2. In terms of biological role, catalyzes the irreversible transamination of the L-tryptophan metabolite L-kynurenine to form kynurenic acid (KA), an intermediate in the tryptophan catabolic pathway which is also a broad spectrum antagonist of the three ionotropic excitatory amino acid receptors among others. May catalyze the beta-elimination of S-conjugates and Se-conjugates of L-(seleno)cysteine, resulting in the cleavage of the C-S or C-Se bond. Has transaminase activity towards L-kynurenine, tryptophan, phenylalanine, serine, cysteine, methionine, histidine, glutamine and asparagine with glyoxylate as an amino group acceptor (in vitro). Has lower activity with 2-oxoglutarate as amino group acceptor (in vitro). This Rattus norvegicus (Rat) protein is Kynurenine--oxoglutarate transaminase 3.